The chain runs to 281 residues: Very long chain fatty acid elongase 7 (281 aa).

Ala-2 is subject to N-acetylalanine. The Lumenal segment spans residues 2–27; that stretch reads AFSDLTSRTVHLYDNWIKDADPRVED. A helical membrane pass occupies residues 28 to 48; it reads WLLMSSPLPQTILLGFYVYFV. Residues 49-72 lie on the Cytoplasmic side of the membrane; the sequence is TSLGPKLMENRKPFELKKAMITYN. The helical transmembrane segment at 73 to 93 threads the bilayer; sequence FFIVLFSVYMCYEFVMSGWGI. At 94–115 the chain is on the lumenal side; the sequence is GYSFRCDIVDYSRSPTALRMAR. Cys-99 and Cys-231 are joined by a disulfide. A helical membrane pass occupies residues 116–136; sequence TCWLYYFSKFIELLDTIFFVL. 5 residues coordinate 3-oxoeicosanoyl-CoA: Lys-124, Arg-137, Lys-139, Gln-142, and His-147. Topologically, residues 137–142 are cytoplasmic; it reads RKKNSQ. A helical transmembrane segment spans residues 143–162; that stretch reads VTFLHVFHHTIMPWTWWFGV. Residues 147–151 carry the HxxHH motif motif; that stretch reads HVFHH. Catalysis depends on His-150, which acts as the Nucleophile. Topologically, residues 163–171 are lumenal; it reads KFAAGGLGT. Residues 172-194 form a helical membrane-spanning segment; that stretch reads FHALLNTAVHVVMYSYYGLSALG. Residues Tyr-187, Lys-204, Thr-208, and Gln-211 each contribute to the 3-oxoeicosanoyl-CoA site. The Cytoplasmic portion of the chain corresponds to 195-206; sequence PAYQKYLWWKKY. Residues 207 to 227 form a helical membrane-spanning segment; that stretch reads LTSLQLVQFVIVAIHISQFFF. Over 228–236 the chain is Lumenal; it reads MEDCKYQFP. A helical membrane pass occupies residues 237–257; sequence VFACIIMSYSFMFLLLFLHFW. At 258–281 the chain is on the cytoplasmic side; that stretch reads YRAYTKGQRLPKTVKNGTCKNKDN. Arg-266 provides a ligand contact to 3-oxoeicosanoyl-CoA. A Di-lysine motif motif is present at residues 277 to 281; the sequence is KNKDN.

It belongs to the ELO family. ELOVL7 subfamily. In terms of assembly, homodimer. Interacts with TECR. In terms of tissue distribution, expressed in most tissues except heart and skeletal muscle.

It is found in the endoplasmic reticulum membrane. The catalysed reaction is a very-long-chain acyl-CoA + malonyl-CoA + H(+) = a very-long-chain 3-oxoacyl-CoA + CO2 + CoA. It catalyses the reaction eicosanoyl-CoA + malonyl-CoA + H(+) = 3-oxodocosanoyl-CoA + CO2 + CoA. It carries out the reaction (5Z,8Z,11Z,14Z)-eicosatetraenoyl-CoA + malonyl-CoA + H(+) = (7Z,10Z,13Z,16Z)-3-oxodocosatetraenoyl-CoA + CO2 + CoA. The enzyme catalyses (6Z,9Z,12Z)-octadecatrienoyl-CoA + malonyl-CoA + H(+) = (8Z,11Z,14Z)-3-oxoeicosatrienoyl-CoA + CO2 + CoA. The catalysed reaction is (9Z,12Z)-octadecadienoyl-CoA + malonyl-CoA + H(+) = (11Z,14Z)-3-oxoicosa-11,14-dienoyl-CoA + CO2 + CoA. It catalyses the reaction (9Z)-octadecenoyl-CoA + malonyl-CoA + H(+) = 3-oxo-(11Z)-eicosenoyl-CoA + CO2 + CoA. It carries out the reaction octadecanoyl-CoA + malonyl-CoA + H(+) = 3-oxoeicosanoyl-CoA + CO2 + CoA. The enzyme catalyses hexadecanoyl-CoA + malonyl-CoA + H(+) = 3-oxooctadecanoyl-CoA + CO2 + CoA. The catalysed reaction is (9Z,12Z,15Z)-octadecatrienoyl-CoA + malonyl-CoA + H(+) = (11Z,14Z,17Z)-3-oxoeicosatrienoyl-CoA + CO2 + CoA. The protein operates within lipid metabolism; fatty acid biosynthesis. Its function is as follows. Catalyzes the first and rate-limiting reaction of the four reactions that constitute the long-chain fatty acids elongation cycle. This endoplasmic reticulum-bound enzymatic process allows the addition of 2 carbons to the chain of long- and very long-chain fatty acids (VLCFAs) per cycle. Condensing enzyme with higher activity toward C18 acyl-CoAs, especially C18:3(n-3) acyl-CoAs and C18:3(n-6)-CoAs. Also active toward C20:4-, C18:0-, C18:1-, C18:2- and C16:0-CoAs, and weakly toward C20:0-CoA. Little or no activity toward C22:0-, C24:0-, or C26:0-CoAs. May participate in the production of saturated and polyunsaturated VLCFAs of different chain lengths that are involved in multiple biological processes as precursors of membrane lipids and lipid mediators. The chain is Very long chain fatty acid elongase 7 from Homo sapiens (Human).